We begin with the raw amino-acid sequence, 1081 residues long: FHIP family protein GA25918 (1081 aa).

Residues 1–11 (MSWLRSSPLRQ) show a composition bias toward polar residues. Disordered regions lie at residues 1–31 (MSWL…GSLR), 504–524 (ARPK…EQPI), 650–685 (ADEE…MGGG), 830–913 (NENS…AASS), and 933–1027 (NNNN…SEPA). The residue at position 508 (S508) is a Phosphoserine. Low complexity predominate over residues 657 to 668 (TDLTVTTTTASE). Position 833 is a phosphoserine (S833). Positions 840 to 856 (QPQTTLSQQQQQQQGQQ) are enriched in low complexity. Residues 857-876 (RSAYATLSAATPVQATQTSA) are compositionally biased toward polar residues. Composition is skewed to low complexity over residues 891–913 (SKSI…AASS) and 933–953 (NNNN…GTGT). A compositionally biased stretch (polar residues) spans 954–963 (CETSLSTNPQ). The segment covering 964–993 (SGAAAARSTGTATTANGNSSNSNISIGGST) has biased composition (low complexity). Residues 994–1010 (QTLSGHSNTTTYSSSTL) are compositionally biased toward polar residues.

This sequence belongs to the FHIP family.

The sequence is that of FHIP family protein GA25918 from Drosophila pseudoobscura pseudoobscura (Fruit fly).